Here is a 332-residue protein sequence, read N- to C-terminus: NADH-quinone oxidoreductase subunit H (332 aa).

Helical transmembrane passes span 16-36 (VFFG…TYAI), 87-107 (YVLA…ALPF), 116-136 (IGVG…GVVT), 164-184 (LVMS…VDIV), 190-210 (VWFI…AVAE), 231-251 (VEYS…YLFA), 253-273 (AALI…LGWI), 277-297 (VWFA…RATF), and 312-332 (VLLP…SLFF).

The protein belongs to the complex I subunit 1 family. As to quaternary structure, NDH-1 is composed of 14 different subunits. Subunits NuoA, H, J, K, L, M, N constitute the membrane sector of the complex.

It is found in the cell membrane. It carries out the reaction a quinone + NADH + 5 H(+)(in) = a quinol + NAD(+) + 4 H(+)(out). Functionally, NDH-1 shuttles electrons from NADH, via FMN and iron-sulfur (Fe-S) centers, to quinones in the respiratory chain. The immediate electron acceptor for the enzyme in this species is believed to be ubiquinone. Couples the redox reaction to proton translocation (for every two electrons transferred, four hydrogen ions are translocated across the cytoplasmic membrane), and thus conserves the redox energy in a proton gradient. This subunit may bind ubiquinone. The sequence is that of NADH-quinone oxidoreductase subunit H from Geobacillus thermodenitrificans (strain NG80-2).